We begin with the raw amino-acid sequence, 69 residues long: Putative membrane protein insertion efficiency factor (69 aa).

Belongs to the UPF0161 family.

Its subcellular location is the cell membrane. Its function is as follows. Could be involved in insertion of integral membrane proteins into the membrane. In Caldanaerobacter subterraneus subsp. tengcongensis (strain DSM 15242 / JCM 11007 / NBRC 100824 / MB4) (Thermoanaerobacter tengcongensis), this protein is Putative membrane protein insertion efficiency factor.